Reading from the N-terminus, the 2555-residue chain is Plipastatin synthase subunit C (2555 aa).

A condensation 1 region spans residues 7–306; it reads IQDIYPLSFM…NTIPIRAQSD (300 aa). The interval 491–894 is adenylation 1; it reads TYAELDMYAS…SIEGVREAAV (404 aa). A Carrier 1 domain is found at 967–1042; sequence APRNVTEMKL…GLATVIREGT (76 aa). Ser-1002 is modified (O-(pantetheine 4'-phosphoryl)serine). The segment at 1054–1344 is condensation 2; that stretch reads KQETYPVSSA…NTLALRTRPE (291 aa). The adenylation 2 stretch occupies residues 1532–1927; sequence TYEDLNSWAN…QIDGVKEAAV (396 aa). Residues 2003 to 2077 form the Carrier 2 domain; that stretch reads PPRNELEEQL…DLSPFIRKSE (75 aa). Ser-2038 bears the O-(pantetheine 4'-phosphoryl)serine mark. Positions 2085–2548 are epimerization 3; the sequence is IQGDVPWTPV…SLTAEDLDSI (464 aa).

It belongs to the ATP-dependent AMP-binding enzyme family. The cofactor is pantetheine 4'-phosphate.

Functionally, this protein is a multifunctional enzyme, able to activate and polymerize the amino acids Glu and Ala/Val as part of the biosynthesis of the lipopeptide antibiotic plipastatin. The Ala/Val residue is further epimerized to the D-isomer form. The activation sites for these amino acids consist of individual domains. The sequence is that of Plipastatin synthase subunit C (ppsC) from Bacillus subtilis (strain 168).